Reading from the N-terminus, the 676-residue chain is Hypermethylated in cancer 1 protein (676 aa).

Positions 1 to 27 are disordered; sequence APGARPAASRERGHKSREERCGERGAA. Positions 8–23 are enriched in basic and acidic residues; that stretch reads ASRERGHKSREERCGE. The 64-residue stretch at 63–126 folds into the BTB domain; sequence CDVIIVVQNA…IYTGRLGECE (64 aa). The binding to CtBP stretch occupies residues 241 to 245; the sequence is GLDLS. Disordered stretches follow at residues 264–326 and 342–405; these read PAEP…LPRG and GPYL…DRYC. Composition is skewed to basic and acidic residues over residues 266–278 and 351–361; these read EPRE…RHDS and EKELEREEKAE. Over residues 384–398 the composition is skewed to low complexity; the sequence is STSEETGSSEGPSPG. 5 C2H2-type zinc fingers span residues 420–447, 474–501, 502–529, 530–557, and 558–585; these read YVCI…EEEL, YRCS…LTRP, YPCT…GLKP, FACD…GEKP, and YECQ…AGPD.

This sequence belongs to the krueppel C2H2-type zinc-finger protein family. Hic subfamily. In terms of assembly, interacts with CtBP. As to expression, isoform 1 is highly expressed in kidney and lung. Expression of isoform 2 is higher in the lens, retina and stomach, and extremely low in heart, muscle, kidney and lung. Isoform 3 is weakly expressed in heart, kidney and lens.

It is found in the nucleus. Its function is as follows. Binds specifically to the gamma F-1-binding motif of the gamma F-crystallin promoter. May have a regulatory role in sclerotome specification and/or differentiation. Isoform 2 functions as a transcriptional repressor in lens cells. The polypeptide is Hypermethylated in cancer 1 protein (HIC1) (Gallus gallus (Chicken)).